The sequence spans 444 residues: 23S rRNA (uracil(1939)-C(5))-methyltransferase RlmD (444 aa).

A TRAM domain is found at 5 to 67; it reads RNRFDRTPFQ…RHFDEAKTVE (63 aa). [4Fe-4S] cluster-binding residues include C80, C86, C89, and C168. Positions 276, 305, 310, 326, 353, and 374 each coordinate S-adenosyl-L-methionine. C400 functions as the Nucleophile in the catalytic mechanism.

This sequence belongs to the class I-like SAM-binding methyltransferase superfamily. RNA M5U methyltransferase family. RlmD subfamily.

It carries out the reaction uridine(1939) in 23S rRNA + S-adenosyl-L-methionine = 5-methyluridine(1939) in 23S rRNA + S-adenosyl-L-homocysteine + H(+). Its function is as follows. Catalyzes the formation of 5-methyl-uridine at position 1939 (m5U1939) in 23S rRNA. In Xanthomonas campestris pv. campestris (strain 8004), this protein is 23S rRNA (uracil(1939)-C(5))-methyltransferase RlmD.